The chain runs to 72 residues: DNA-directed RNA polymerase subunit epsilon (72 aa).

It belongs to the RNA polymerase subunit epsilon family. RNAP is composed of a core of 2 alpha, a beta and a beta' subunit. The core is associated with a delta subunit, and at least one of epsilon or omega. When a sigma factor is associated with the core the holoenzyme is formed, which can initiate transcription.

It catalyses the reaction RNA(n) + a ribonucleoside 5'-triphosphate = RNA(n+1) + diphosphate. Its function is as follows. A non-essential component of RNA polymerase (RNAP). This is DNA-directed RNA polymerase subunit epsilon from Levilactobacillus brevis (strain ATCC 367 / BCRC 12310 / CIP 105137 / JCM 1170 / LMG 11437 / NCIMB 947 / NCTC 947) (Lactobacillus brevis).